The chain runs to 393 residues: Protein TsgA (393 aa).

12 helical membrane passes run 11–31 (WISF…GMVM), 51–71 (FLNA…EIVP), 78–98 (FGFL…SLAL), 101–121 (AAMF…TFLV), 134–154 (LLFT…IAAF), 162–182 (WYWV…LTFG), 206–226 (IGVL…LGFI), 245–265 (TLVS…SFIL), 273–293 (ILTV…TGTP), 297–317 (AWSI…IITL), 332–352 (FVLT…GPIV), and 361–381 (LLTA…LGFV).

This sequence belongs to the major facilitator superfamily. TsgA family.

Its subcellular location is the cell inner membrane. This chain is Protein TsgA, found in Escherichia coli O139:H28 (strain E24377A / ETEC).